Reading from the N-terminus, the 119-residue chain is Protein TusC (119 aa).

Belongs to the DsrF/TusC family. As to quaternary structure, heterohexamer, formed by a dimer of trimers. The hexameric TusBCD complex contains 2 copies each of TusB, TusC and TusD. The TusBCD complex interacts with TusE.

Its subcellular location is the cytoplasm. In terms of biological role, part of a sulfur-relay system required for 2-thiolation of 5-methylaminomethyl-2-thiouridine (mnm(5)s(2)U) at tRNA wobble positions. The sequence is that of Protein TusC from Serratia proteamaculans (strain 568).